Here is a 409-residue protein sequence, read N- to C-terminus: Astacin-like metalloendopeptidase (409 aa).

Positions Met1–Gly19 are cleaved as a signal peptide. The propeptide occupies Phe20–Arg86. The segment covering Thr30–Glu42 has biased composition (low complexity). A disordered region spans residues Thr30–Ser55. In terms of domain architecture, Peptidase M12A spans Ser87–Ser285. 5 disulfides stabilise this stretch: Cys91–Cys94, Cys134–Cys284, Cys155–Cys175, Cys287–Cys313, and Cys339–Cys362. His183 lines the Zn(2+) pocket. Glu184 is an active-site residue. Positions 187 and 193 each coordinate Zn(2+). In terms of domain architecture, CUB spans Cys287 to Ala399.

It depends on Zn(2+) as a cofactor.

The protein resides in the cytoplasm. Its subcellular location is the cell membrane. It is found in the cytoplasmic vesicle. It localises to the secretory vesicle. The protein localises to the cortical granule. Its function is as follows. Probable oocyte-specific oolemmal receptor involved in sperm and egg adhesion and fertilization. Protease which may play a role in the breaking down of the vitelline membrane (days 0-5) and possibly, in the digestion of the egg white (days 9-12). This chain is Astacin-like metalloendopeptidase, found in Coturnix japonica (Japanese quail).